Reading from the N-terminus, the 178-residue chain is Protein GrpE (178 aa).

Basic and acidic residues-rich tracts occupy residues 1 to 19 (MAKHKQEEHPEDVEVKEEA) and 30 to 42 (SPEKSELELANER). The disordered stretch occupies residues 1 to 42 (MAKHKQEEHPEDVEVKEEAVETAEQAESASPEKSELELANER).

This sequence belongs to the GrpE family. Homodimer.

The protein resides in the cytoplasm. Functionally, participates actively in the response to hyperosmotic and heat shock by preventing the aggregation of stress-denatured proteins, in association with DnaK and GrpE. It is the nucleotide exchange factor for DnaK and may function as a thermosensor. Unfolded proteins bind initially to DnaJ; upon interaction with the DnaJ-bound protein, DnaK hydrolyzes its bound ATP, resulting in the formation of a stable complex. GrpE releases ADP from DnaK; ATP binding to DnaK triggers the release of the substrate protein, thus completing the reaction cycle. Several rounds of ATP-dependent interactions between DnaJ, DnaK and GrpE are required for fully efficient folding. The protein is Protein GrpE of Streptococcus sanguinis (strain SK36).